The following is a 419-amino-acid chain: Akuammiline synthase 1 (419 aa).

The Proton acceptor role is filled by His-151. Positions 206–213 (TRRFVFPA) match the Nuclear localization signal motif. Asp-359 acts as the Proton acceptor in catalysis.

It belongs to the plant acyltransferase family. In terms of assembly, monomer.

The protein localises to the cytoplasm. Its subcellular location is the nucleus. It catalyses the reaction rhazimol + acetyl-CoA = akuammiline + CoA + H(+). Its pathway is alkaloid biosynthesis. Its function is as follows. Acyltransferase involved in the biosynthesis of akuammilan monoterpene indole alkaloids (MIAs) natural products, components with various biological properties such as antidiabetic, antibacterial, anti-inflammatory, anticancer, and antimalarial activities. Catalyzes the conversion of rhazimol to akuammiline. This Alstonia scholaris (Dogbane) protein is Akuammiline synthase 1.